A 340-amino-acid polypeptide reads, in one-letter code: Zinc finger protein 367 (340 aa).

Residues 96–140 (LPTLRGAPPSSASVAAVSGGEDEEEASSPDSGHLKDGIRRGRPRA) form a disordered region. Residues 101 to 114 (GAPPSSASVAAVSG) show a composition bias toward low complexity. Basic and acidic residues predominate over residues 127-140 (GHLKDGIRRGRPRA). 2 C2H2-type zinc fingers span residues 157 to 179 (IRCN…KRTH) and 185 to 209 (YLCD…QRLH). A disordered region spans residues 280–317 (KGKLVQKADQEQQDPLEYLQSDEEDDEKSGAQRRLQEQ). The stretch at 299–332 (QSDEEDDEKSGAQRRLQEQRERLHGALALIELAN) forms a coiled coil. Ser300 carries the phosphoserine modification. A compositionally biased stretch (basic and acidic residues) spans 307–317 (KSGAQRRLQEQ).

Belongs to the krueppel C2H2-type zinc-finger protein family.

The protein localises to the nucleus. Functionally, transcriptional activator. May be involved in transcriptional activation of erythroid genes. The chain is Zinc finger protein 367 (Znf367) from Rattus norvegicus (Rat).